Reading from the N-terminus, the 396-residue chain is Acetate kinase (396 aa).

Asn-8 provides a ligand contact to Mg(2+). Lys-15 lines the ATP pocket. Residue Arg-89 participates in substrate binding. Asp-146 functions as the Proton donor/acceptor in the catalytic mechanism. ATP-binding positions include 206–210, 283–285, and 331–335; these read HIGNG, DMR, and GIGEN. Position 383 (Glu-383) interacts with Mg(2+).

Belongs to the acetokinase family. In terms of assembly, homodimer. It depends on Mg(2+) as a cofactor. Mn(2+) is required as a cofactor.

The protein resides in the cytoplasm. The catalysed reaction is acetate + ATP = acetyl phosphate + ADP. The protein operates within metabolic intermediate biosynthesis; acetyl-CoA biosynthesis; acetyl-CoA from acetate: step 1/2. Its function is as follows. Catalyzes the formation of acetyl phosphate from acetate and ATP. Can also catalyze the reverse reaction. The protein is Acetate kinase of Streptococcus gordonii (strain Challis / ATCC 35105 / BCRC 15272 / CH1 / DL1 / V288).